The primary structure comprises 402 residues: Nicotinate phosphoribosyltransferase (402 aa).

Position 224 is a phosphohistidine; by autocatalysis (His-224).

It belongs to the NAPRTase family. In terms of processing, transiently phosphorylated on a His residue during the reaction cycle. Phosphorylation strongly increases the affinity for substrates and increases the rate of nicotinate D-ribonucleotide production. Dephosphorylation regenerates the low-affinity form of the enzyme, leading to product release.

The catalysed reaction is nicotinate + 5-phospho-alpha-D-ribose 1-diphosphate + ATP + H2O = nicotinate beta-D-ribonucleotide + ADP + phosphate + diphosphate. Its pathway is cofactor biosynthesis; NAD(+) biosynthesis; nicotinate D-ribonucleotide from nicotinate: step 1/1. Functionally, catalyzes the synthesis of beta-nicotinate D-ribonucleotide from nicotinate and 5-phospho-D-ribose 1-phosphate at the expense of ATP. The protein is Nicotinate phosphoribosyltransferase of Neisseria meningitidis serogroup A / serotype 4A (strain DSM 15465 / Z2491).